The following is a 136-amino-acid chain: Large ribosomal subunit protein uL16 (136 aa).

It belongs to the universal ribosomal protein uL16 family. Part of the 50S ribosomal subunit.

Its function is as follows. Binds 23S rRNA and is also seen to make contacts with the A and possibly P site tRNAs. In Shewanella pealeana (strain ATCC 700345 / ANG-SQ1), this protein is Large ribosomal subunit protein uL16.